Consider the following 396-residue polypeptide: Purine ribonucleoside efflux pump NepI (396 aa).

Residues 1 to 21 (MSEFIAENRGADAITRPNWSA) are Cytoplasmic-facing. The chain crosses the membrane as a helical span at residues 22–42 (VFSVAFCVACLIIVEFLPVSL). Topologically, residues 43 to 54 (LTPMAQDLGISE) are periplasmic. Residues 55–75 (GVAGQSVTVTAFVAMFASLFI) form a helical membrane-spanning segment. Residues 76-85 (TQTIQATDRR) are Cytoplasmic-facing. Residues 86–106 (NVVILFAVLLTLSCLLVSFAN) form a helical membrane-spanning segment. Residue Ser107 is a topological domain, periplasmic. The chain crosses the membrane as a helical span at residues 108–128 (FSLLLIGRACLGLALGGFWAM). At 129 to 147 (SASLTMRLVPPRTVPKALS) the chain is on the cytoplasmic side. Residues 148 to 168 (VIFGAVSIALVIAAPLGSFLG) form a helical membrane-spanning segment. Over 169–175 (ELIGWRN) the chain is Periplasmic. The chain crosses the membrane as a helical span at residues 176–196 (VFNAAAVMGVLCIFWIIKSLP). Residues 197–215 (SLPGEPSHQKQNTFRLLQR) are Cytoplasmic-facing. Residues 216–236 (PGVMAGMIAIFMSFAGQFAFF) form a helical membrane-spanning segment. Over 237–255 (TYIRPVYMNLAGFSVDGLT) the chain is Periplasmic. Residues 256 to 276 (LVLLSFGIASFIGTSLSSFIL) traverse the membrane as a helical segment. The Cytoplasmic segment spans residues 277-281 (KRSVK). Residues 282–302 (LALAGAPLILAVSALVLTLWG) form a helical membrane-spanning segment. Residues 303 to 305 (SDK) lie on the Periplasmic side of the membrane. The helical transmembrane segment at 306-326 (IVATGVAIIWGLTFALVPVGW) threads the bilayer. The Cytoplasmic segment spans residues 327–343 (STWITRSLADQAEKAGS). Residues 344 to 364 (IQVAVIQLANTCGAAIGGYAL) form a helical membrane-spanning segment. Residues 365–366 (DN) lie on the Periplasmic side of the membrane. The helical transmembrane segment at 367–387 (IGLTSPLMFSGTLMLLTALLV) threads the bilayer. Residues 388-396 (TAKVKMKKS) lie on the Cytoplasmic side of the membrane.

It belongs to the major facilitator superfamily. DHA1 family. NepI (TC 2.A.1.2.26) subfamily.

It is found in the cell inner membrane. The enzyme catalyses inosine(in) + H(+)(out) = inosine(out) + H(+)(in). It catalyses the reaction guanosine(in) + H(+)(out) = guanosine(out) + H(+)(in). Its function is as follows. Involved in the efflux of purine ribonucleosides, such as inosine and guanosine. The protein is Purine ribonucleoside efflux pump NepI of Shigella sonnei (strain Ss046).